The sequence spans 100 residues: Osteocalcin (100 aa).

Residues 1-23 (MRALTLLALLALAALCIAGQAGA) form the signal peptide. Positions 24–51 (KPSGAESSKGAAFVSKQEGSEVVKRPRR) are excised as a propeptide. The 47-residue stretch at 52-98 (YLYQWLGAPVPYPDTLEPRREVCELNPDCDELADHIGFQEAYRRFYG) folds into the Gla domain. Residues glutamate 68, glutamate 72, glutamate 75, and aspartate 81 each contribute to the Ca(2+) site. 3 positions are modified to 4-carboxyglutamate: glutamate 68, glutamate 72, and glutamate 75. Cysteine 74 and cysteine 80 are oxidised to a cystine.

Belongs to the osteocalcin/matrix Gla protein family. Gamma-carboxyglutamate residues are formed by vitamin K dependent carboxylation by GGCX. These residues are essential for the binding of calcium. Decarboxylation promotes the hormone activity.

It localises to the secreted. In terms of biological role, the carboxylated form is one of the main organic components of the bone matrix, which constitutes 1-2% of the total bone protein: it acts as a negative regulator of bone formation and is required to limit bone formation without impairing bone resorption or mineralization. The carboxylated form binds strongly to apatite and calcium. Functionally, the uncarboxylated form acts as a hormone secreted by osteoblasts, which regulates different cellular processes, such as energy metabolism, male fertility and brain development. Regulates of energy metabolism by acting as a hormone favoring pancreatic beta-cell proliferation, insulin secretion and sensitivity and energy expenditure. Uncarboxylated osteocalcin hormone also promotes testosterone production in the testes: acts as a ligand for G protein-coupled receptor GPRC6A at the surface of Leydig cells, initiating a signaling response that promotes the expression of enzymes required for testosterone synthesis in a CREB-dependent manner. Also acts as a regulator of brain development: osteocalcin hormone crosses the blood-brain barrier and acts as a ligand for GPR158 on neurons, initiating a signaling response that prevents neuronal apoptosis in the hippocampus, favors the synthesis of all monoamine neurotransmitters and inhibits that of gamma-aminobutyric acid (GABA). Osteocalcin also crosses the placenta during pregnancy and maternal osteocalcin is required for fetal brain development. This chain is Osteocalcin, found in Pan troglodytes (Chimpanzee).